The chain runs to 376 residues: Anhydro-N-acetylmuramic acid kinase (376 aa).

22 to 29 (GTSMDGAD) contacts ATP.

Belongs to the anhydro-N-acetylmuramic acid kinase family.

The enzyme catalyses 1,6-anhydro-N-acetyl-beta-muramate + ATP + H2O = N-acetyl-D-muramate 6-phosphate + ADP + H(+). It functions in the pathway amino-sugar metabolism; 1,6-anhydro-N-acetylmuramate degradation. The protein operates within cell wall biogenesis; peptidoglycan recycling. Catalyzes the specific phosphorylation of 1,6-anhydro-N-acetylmuramic acid (anhMurNAc) with the simultaneous cleavage of the 1,6-anhydro ring, generating MurNAc-6-P. Is required for the utilization of anhMurNAc either imported from the medium or derived from its own cell wall murein, and thus plays a role in cell wall recycling. The chain is Anhydro-N-acetylmuramic acid kinase from Neisseria gonorrhoeae (strain NCCP11945).